The sequence spans 149 residues: Alpha-amylase/trypsin inhibitor CMb (149 aa).

An N-terminal signal peptide occupies residues 1–24 (MASKSSCDLLLAAVLVSIFAAVAA). The N-linked (GlcNAc...) asparagine glycan is linked to Asn-124.

This sequence belongs to the protease inhibitor I6 (cereal trypsin/alpha-amylase inhibitor) family. Heterotetramer of one CMa, one CMb and two CMd chains. Post-translationally, five disulfide bonds, which are essential for the inhibitor activity, are probably present. Exists both in a glycosylated and in an unglycosylated form. The glycosylated form is a potent allergen. In terms of tissue distribution, endosperm.

The protein resides in the secreted. Part of a complex with inhibitory activity, but CMb is inactive as a separate subunit. This is Alpha-amylase/trypsin inhibitor CMb (IAT2) from Hordeum vulgare (Barley).